A 213-amino-acid chain; its full sequence is Transcription antitermination protein NusB (213 aa).

This sequence belongs to the NusB family.

Involved in transcription antitermination. Required for transcription of ribosomal RNA (rRNA) genes. Binds specifically to the boxA antiterminator sequence of the ribosomal RNA (rrn) operons. The sequence is that of Transcription antitermination protein NusB from Picosynechococcus sp. (strain ATCC 27264 / PCC 7002 / PR-6) (Agmenellum quadruplicatum).